The primary structure comprises 1083 residues: DNA-directed RNA polymerase subunit beta (1083 aa).

It belongs to the RNA polymerase beta chain family. In terms of assembly, in plastids the minimal PEP RNA polymerase catalytic core is composed of four subunits: alpha, beta, beta', and beta''. When a (nuclear-encoded) sigma factor is associated with the core the holoenzyme is formed, which can initiate transcription.

The protein resides in the plastid. The protein localises to the chloroplast. The enzyme catalyses RNA(n) + a ribonucleoside 5'-triphosphate = RNA(n+1) + diphosphate. Its function is as follows. DNA-dependent RNA polymerase catalyzes the transcription of DNA into RNA using the four ribonucleoside triphosphates as substrates. The polypeptide is DNA-directed RNA polymerase subunit beta (Acorus calamus var. americanus (American sweet flag)).